A 424-amino-acid chain; its full sequence is Putative glutamate--cysteine ligase 2-3 (424 aa).

Disordered stretches follow at residues 1–20 and 405–424; these read MQMA…PVLV and GAAA…VRRP.

Belongs to the glutamate--cysteine ligase type 2 family. YbdK subfamily.

The enzyme catalyses L-cysteine + L-glutamate + ATP = gamma-L-glutamyl-L-cysteine + ADP + phosphate + H(+). ATP-dependent carboxylate-amine ligase which exhibits weak glutamate--cysteine ligase activity. The sequence is that of Putative glutamate--cysteine ligase 2-3 from Paenarthrobacter aurescens (strain TC1).